The following is a 260-amino-acid chain: Voltage-dependent calcium channel gamma-6 subunit (260 aa).

4 helical membrane passes run 43-63, 143-163, 169-189, and 221-241; these read LLVA…EFWV, VIAV…IMVL, FLLR…FVSL, and LGCG…FLLL.

It belongs to the PMP-22/EMP/MP20 family. CACNG subfamily. As to quaternary structure, interacts with CACNA1C. Identified in a complex with the L-type calcium channel subunits CACNA1C, CACNA2D1 and either CACNB1 or CACNB2. Detected in heart atrium and ventricle, aorta and skeletal muscle. Detected in heart left ventricle.

Its subcellular location is the cell membrane. Regulates the activity of L-type calcium channels that contain CACNA1C as pore-forming subunit. The chain is Voltage-dependent calcium channel gamma-6 subunit (Cacng6) from Rattus norvegicus (Rat).